Here is a 355-residue protein sequence, read N- to C-terminus: 3-dehydroquinate synthase (355 aa).

NAD(+) contacts are provided by residues 71–76 (EGEERK), 105–109 (GVVGD), 129–130 (TS), lysine 142, and lysine 151. Glutamate 184, histidine 246, and histidine 263 together coordinate Zn(2+).

The protein belongs to the sugar phosphate cyclases superfamily. Dehydroquinate synthase family. Requires Co(2+) as cofactor. It depends on Zn(2+) as a cofactor. NAD(+) is required as a cofactor.

The protein localises to the cytoplasm. It catalyses the reaction 7-phospho-2-dehydro-3-deoxy-D-arabino-heptonate = 3-dehydroquinate + phosphate. Its pathway is metabolic intermediate biosynthesis; chorismate biosynthesis; chorismate from D-erythrose 4-phosphate and phosphoenolpyruvate: step 2/7. In terms of biological role, catalyzes the conversion of 3-deoxy-D-arabino-heptulosonate 7-phosphate (DAHP) to dehydroquinate (DHQ). The polypeptide is 3-dehydroquinate synthase (Streptococcus pneumoniae (strain JJA)).